Reading from the N-terminus, the 499-residue chain is MKIALPVFQKFNRLISSCKMSGVFPYNPPVNRQMRELDRSFFITKIPMCAVKFPEPKNISVFSKNFKNCILRVPRIPHVVKLNSSKPKDELTSVQNKKLKTADGNNTPVTKGVLLHESIHSVEDAYGKLPEDALAFLKENSAEIVPHEYVLDYDFWKAEEILRAVLPEQFLEEVPTGFTITGHIAHLNLRTEFKPFDSLIGQVILDKNNKIECVVDKVSSIATQFRTFPMKVIAGKSDSLVVEQKESNCTFKFDFSKVYWNSRLHTEHERLVKQYFQPGQVVCDVFAGVGPFAVPAGKKDVIVLANDLNPESYKYLKENIALNKVAKTVKSFNMDGADFIRQSPQLLQQWIQDEEGGKITIPLPLKKRHRSQQHNDQQPPQPRTKELIIPSHISHYVMNLPDSAISFLGNFRGIFAAHTKGATDTIQMPWVHVHCFEKYPPGDQVTEDELHARVHARIIAALKVTADDLPLNAVSLHLVRKVAPTKPMYCASFQLPANV.

Residues 1-44 (MKIALPVFQKFNRLISSCKMSGVFPYNPPVNRQMRELDRSFFIT) constitute a mitochondrion transit peptide. S-adenosyl-L-methionine is bound by residues His268, 307-308 (DL), 335-336 (DG), and Asn399.

It belongs to the class I-like SAM-binding methyltransferase superfamily. TRM5/TYW2 family. In terms of assembly, monomer.

The protein localises to the mitochondrion matrix. It localises to the nucleus. The protein resides in the cytoplasm. The enzyme catalyses guanosine(37) in tRNA + S-adenosyl-L-methionine = N(1)-methylguanosine(37) in tRNA + S-adenosyl-L-homocysteine + H(+). Specifically methylates the N1 position of guanosine-37 in various cytoplasmic and mitochondrial tRNAs. Methylation is not dependent on the nature of the nucleoside 5' of the target nucleoside. This is the first step in the biosynthesis of wybutosine (yW), a modified base adjacent to the anticodon of tRNAs and required for accurate decoding. Postspliced cytoplasmic tRNAs are imported into the nucleus, where this first step seems to take place, after which they are reexported to the cytoplasm, where the yW sythesis is completed by cytoplasmic enzymes. The sequence is that of tRNA (guanine(37)-N(1))-methyltransferase from Saccharomyces cerevisiae (strain ATCC 204508 / S288c) (Baker's yeast).